We begin with the raw amino-acid sequence, 124 residues long: Small ribosomal subunit protein uS13 (124 aa).

The disordered stretch occupies residues 95–124; the sequence is GLPVRGQRTKTNARTRKGPKRTIAGKKKAR.

Belongs to the universal ribosomal protein uS13 family. In terms of assembly, part of the 30S ribosomal subunit. Forms a loose heterodimer with protein S19. Forms two bridges to the 50S subunit in the 70S ribosome.

Located at the top of the head of the 30S subunit, it contacts several helices of the 16S rRNA. In the 70S ribosome it contacts the 23S rRNA (bridge B1a) and protein L5 of the 50S subunit (bridge B1b), connecting the 2 subunits; these bridges are implicated in subunit movement. Contacts the tRNAs in the A and P-sites. In Mycobacteroides abscessus (strain ATCC 19977 / DSM 44196 / CCUG 20993 / CIP 104536 / JCM 13569 / NCTC 13031 / TMC 1543 / L948) (Mycobacterium abscessus), this protein is Small ribosomal subunit protein uS13.